The chain runs to 180 residues: NADH-quinone oxidoreductase subunit I (180 aa).

4Fe-4S ferredoxin-type domains are found at residues 48 to 80 (IVLT…LQKA) and 90 to 119 (EFFR…LTPD). [4Fe-4S] cluster is bound by residues cysteine 60, cysteine 63, cysteine 66, cysteine 70, cysteine 99, cysteine 102, cysteine 105, and cysteine 109. The disordered stretch occupies residues 160–180 (GKPKGSAQKEAAPIDVKSILP).

The protein belongs to the complex I 23 kDa subunit family. In terms of assembly, NDH-1 is composed of 14 different subunits. Subunits NuoA, H, J, K, L, M, N constitute the membrane sector of the complex. [4Fe-4S] cluster serves as cofactor.

The protein localises to the cell inner membrane. The catalysed reaction is a quinone + NADH + 5 H(+)(in) = a quinol + NAD(+) + 4 H(+)(out). Functionally, NDH-1 shuttles electrons from NADH, via FMN and iron-sulfur (Fe-S) centers, to quinones in the respiratory chain. The immediate electron acceptor for the enzyme in this species is believed to be ubiquinone. Couples the redox reaction to proton translocation (for every two electrons transferred, four hydrogen ions are translocated across the cytoplasmic membrane), and thus conserves the redox energy in a proton gradient. This Tolumonas auensis (strain DSM 9187 / NBRC 110442 / TA 4) protein is NADH-quinone oxidoreductase subunit I.